Reading from the N-terminus, the 1314-residue chain is E3 ubiquitin-protein ligase RNF123 (1314 aa).

The residue at position 2 (Ala-2) is an N-acetylalanine. One can recognise a B30.2/SPRY domain in the interval 74 to 254 (VDSEDEESQG…VAFNFGSRPL (181 aa)). Residues 460–481 (HRSSREGKDSAEDRAEAAEERP) form a disordered region. Positions 462–481 (SSREGKDSAEDRAEAAEERP) are enriched in basic and acidic residues. Phosphoserine is present on Ser-675. Arg-683 is subject to Asymmetric dimethylarginine. The segment at 968–974 (WILVRLW) is interaction with NFKB1. The Zn(2+) site is built by Cys-1254, Cys-1257, Cys-1269, His-1271, Cys-1274, Cys-1277, Cys-1288, and Cys-1291. Residues 1254–1292 (CPICYAHPISAVFQPCGHKSCKACIDQHLMNNKDCFFCK) form an RING-type zinc finger.

In terms of assembly, component of the KPC complex composed of RNF123/KPC1 and UBAC1/KPC2. Interacts with UBAC1 and CDKN1B via its N-terminal domain. Interacts with RIGI (via N-terminus) and IFIH1 (via N-terminus). In terms of processing, ubiquitinated, leading to its degradation. Deubiquitinated by USP19, thereby stimulating CDKN1B ubiquitin-dependent degradation.

It localises to the cytoplasm. It carries out the reaction S-ubiquitinyl-[E2 ubiquitin-conjugating enzyme]-L-cysteine + [acceptor protein]-L-lysine = [E2 ubiquitin-conjugating enzyme]-L-cysteine + N(6)-ubiquitinyl-[acceptor protein]-L-lysine.. It functions in the pathway protein modification; protein ubiquitination. Functionally, catalytic subunit of the KPC complex that acts as E3 ubiquitin-protein ligase. Promotes the ubiquitination and proteasome-mediated degradation of CDKN1B which is the cyclin-dependent kinase inhibitor at the G0-G1 transition of the cell cycle. Also acts as a key regulator of the NF-kappa-B signaling by promoting maturation of the NFKB1 component of NF-kappa-B. Acts by catalyzing ubiquitination of the NFKB1 p105 precursor, leading to limited proteasomal degradation of NFKB1 p105 and generation of the active NFKB1 p50 subunit. Functions also as an inhibitor of innate antiviral signaling mediated by RIGI and IFIH1 independently of its E3 ligase activity. Interacts with the N-terminal CARD domains of RIGI and IFIH1 and competes with the downstream adapter MAVS. The polypeptide is E3 ubiquitin-protein ligase RNF123 (Oryctolagus cuniculus (Rabbit)).